The sequence spans 152 residues: Transcriptional regulator MraZ (152 aa).

SpoVT-AbrB domains follow at residues 5–52 (ATMV…PLPE) and 81–124 (ASEC…DEQT).

It belongs to the MraZ family. As to quaternary structure, forms oligomers.

The protein localises to the cytoplasm. Its subcellular location is the nucleoid. Functionally, negatively regulates its own expression and that of the subsequent genes in the proximal part of the division and cell wall (dcw) gene cluster. Acts by binding directly to DNA. May also regulate the expression of genes outside the dcw cluster. This Yersinia pestis bv. Antiqua (strain Antiqua) protein is Transcriptional regulator MraZ.